Consider the following 197-residue polypeptide: Phosphoheptose isomerase (197 aa).

The SIS domain occupies 36-197; that stretch reads MVNALLNEGK…IDSQLFGSEE (162 aa). 51–53 contributes to the substrate binding site; the sequence is NGG. Zn(2+) contacts are provided by histidine 60 and glutamate 64. Residues glutamate 64, 93–94, 119–121, serine 124, and glutamine 174 contribute to the substrate site; these read ND and STS. Residues glutamine 174 and histidine 182 each contribute to the Zn(2+) site.

The protein belongs to the SIS family. GmhA subfamily. Homotetramer. The cofactor is Zn(2+).

The protein localises to the cytoplasm. It catalyses the reaction 2 D-sedoheptulose 7-phosphate = D-glycero-alpha-D-manno-heptose 7-phosphate + D-glycero-beta-D-manno-heptose 7-phosphate. It participates in carbohydrate biosynthesis; D-glycero-D-manno-heptose 7-phosphate biosynthesis; D-glycero-alpha-D-manno-heptose 7-phosphate and D-glycero-beta-D-manno-heptose 7-phosphate from sedoheptulose 7-phosphate: step 1/1. Catalyzes the isomerization of sedoheptulose 7-phosphate in D-glycero-D-manno-heptose 7-phosphate. In Pseudomonas syringae pv. syringae (strain B728a), this protein is Phosphoheptose isomerase.